We begin with the raw amino-acid sequence, 2100 residues long: Dedicator of cytokinesis protein 8 (2100 aa).

Phosphoserine is present on residues Ser-20, Ser-139, and Ser-452. The disordered stretch occupies residues 424 to 453; sequence DVEPGVGRNSVGEKRSLSQSRRPSERTLSL. The span at 434–452 shows a compositional bias: basic and acidic residues; it reads VGEKRSLSQSRRPSERTLS. The C2 DOCK-type domain occupies 561–730; that stretch reads RNLLYVYPQR…GVFNIEVQAV (170 aa). Residues Ser-905, Ser-937, Ser-1146, and Ser-1244 each carry the phosphoserine modification. In terms of domain architecture, DOCKER spans 1633–2067; it reads KSYQASPDLR…LRPMIERKIP (435 aa). The residue at position 2088 (Ser-2088) is a Phosphoserine.

It belongs to the DOCK family. In terms of assembly, interacts (via DOCKER domain) with GTPase CDC42; the interaction activates CDC42 by exchanging GDP for GTP. The unphosphorylated form interacts (via DOCKER domain) with LRCH1 (via LRR repeats); the interaction prevents the association between DOCK8 and CDC42. Interacts with CCDC88B. In terms of processing, in response to chemokine CXCL12/SDF-1-alpha stimulation, phosphorylated by PRKCA/PKC-alpha which promotes DOCK8 dissociation from LRCH1. In terms of tissue distribution, expressed in T cells. Expressed in bone marrow-derived dendritic cells.

It localises to the cytoplasm. It is found in the cell membrane. The protein resides in the cell projection. The protein localises to the lamellipodium membrane. Its function is as follows. Guanine nucleotide exchange factor (GEF) which specifically activates small GTPase CDC42 by exchanging bound GDP for free GTP. During immune responses, required for interstitial dendritic cell (DC) migration by locally activating CDC42 at the leading edge membrane of DC. Required for CD4(+) T-cell migration in response to chemokine stimulation by promoting CDC42 activation at T cell leading edge membrane. Is involved in NK cell cytotoxicity controlling polarization of microtubule-organizing center (MTOC), and possibly regulating CCDC88B-mediated lytic granule transport to MTOC during cell killing. The chain is Dedicator of cytokinesis protein 8 (Dock8) from Mus musculus (Mouse).